Consider the following 142-residue polypeptide: Hemoglobin subunit epsilon (142 aa).

Positions 3-142 constitute a Globin domain; it reads HFTAEEKAAI…KLVSAVAIAL (140 aa). 2 positions are modified to phosphoserine: S14 and S51. Heme b contacts are provided by H64 and H93.

Belongs to the globin family. As to quaternary structure, heterotetramer of two alpha chains and two epsilon chains in early embryonic hemoglobin Gower-2; two zeta chains and two epsilon chains in early embryonic hemoglobin Gower-1. In terms of tissue distribution, red blood cells.

Functionally, the epsilon chain is a beta-type chain of early mammalian embryonic hemoglobin. This Callithrix geoffroyi (Geoffroy's marmoset) protein is Hemoglobin subunit epsilon (HBE1).